Here is a 320-residue protein sequence, read N- to C-terminus: Pyrroline-5-carboxylate reductase 2 (320 aa).

S2 bears the N-acetylserine mark. NADP(+) is bound by residues 6–11 (IGAGQL) and S34. Residues A8, Q10, L11, S34, E36, N56, V70, K71, and A97 each contribute to the NADPH site. NADP(+)-binding positions include N56, 69–72 (AVKP), and 95–97 (CAA). E164 is a binding site for L-proline. Residue N230 participates in NADPH binding. Residues A237 and T238 each coordinate L-proline. Residues 296 to 305 (TVSTLTPSSP) show a composition bias toward low complexity. Residues 296 to 320 (TVSTLTPSSPGKLLTRSLALGGKKD) are disordered. The residue at position 304 (S304) is a Phosphoserine.

Belongs to the pyrroline-5-carboxylate reductase family. As to quaternary structure, homodecamer; composed of 5 homodimers. Interacts with LTO1.

The protein localises to the cytoplasm. It localises to the mitochondrion. It carries out the reaction L-proline + NADP(+) = (S)-1-pyrroline-5-carboxylate + NADPH + 2 H(+). The enzyme catalyses L-proline + NAD(+) = (S)-1-pyrroline-5-carboxylate + NADH + 2 H(+). It functions in the pathway amino-acid biosynthesis; L-proline biosynthesis; L-proline from L-glutamate 5-semialdehyde: step 1/1. Functionally, oxidoreductase that catalyzes the last step in proline biosynthesis, which corresponds to the reduction of pyrroline-5-carboxylate to L-proline using NAD(P)H. At physiologic concentrations, has higher specific activity in the presence of NADH. Involved in cellular response to oxidative stress. In some cell types, such as erythrocytes, its primary function may be the generation of NADP(+). The protein is Pyrroline-5-carboxylate reductase 2 (PYCR2) of Pongo abelii (Sumatran orangutan).